A 742-amino-acid polypeptide reads, in one-letter code: Zinc finger protein 280C (742 aa).

Residues Lys-10, Lys-23, Lys-42, Lys-65, Lys-85, Lys-123, and Lys-135 each participate in a glycyl lysine isopeptide (Lys-Gly) (interchain with G-Cter in SUMO2) cross-link. Residues Phe-138 to Gln-168 show a composition bias toward polar residues. The tract at residues Phe-138–Arg-243 is disordered. Glycyl lysine isopeptide (Lys-Gly) (interchain with G-Cter in SUMO2) cross-links involve residues Lys-180, Lys-186, and Lys-193. Residues Pro-182–Asn-191 show a composition bias toward polar residues. Over residues Ser-200 to Gln-222 the composition is skewed to low complexity. A compositionally biased stretch (polar residues) spans Thr-223–Arg-243. 5 C2H2-type zinc fingers span residues Phe-323–His-345, Thr-360–His-383, Thr-390–His-413, Tyr-420–His-443, and Tyr-477–His-499. Low complexity predominate over residues Leu-523–Thr-578. A disordered region spans residues Leu-523–Lys-608. Residues Gly-579 to Lys-592 are compositionally biased toward polar residues. Lys-580 is covalently cross-linked (Glycyl lysine isopeptide (Lys-Gly) (interchain with G-Cter in SUMO2)). Positions Ser-593–Lys-608 are enriched in basic residues.

It is found in the nucleus. Functionally, may function as a transcription factor. This chain is Zinc finger protein 280C (Znf280c), found in Mus musculus (Mouse).